Here is a 528-residue protein sequence, read N- to C-terminus: Exodeoxyribonuclease 7 large subunit (528 aa).

Residues 486 to 528 (QGDRDAVIDGESSGVLPPSAAPAPTRPTPRPKPASSSDQGSLF) are disordered. A compositionally biased stretch (pro residues) spans 504-517 (SAAPAPTRPTPRPK).

This sequence belongs to the XseA family. In terms of assembly, heterooligomer composed of large and small subunits.

It localises to the cytoplasm. It catalyses the reaction Exonucleolytic cleavage in either 5'- to 3'- or 3'- to 5'-direction to yield nucleoside 5'-phosphates.. In terms of biological role, bidirectionally degrades single-stranded DNA into large acid-insoluble oligonucleotides, which are then degraded further into small acid-soluble oligonucleotides. The protein is Exodeoxyribonuclease 7 large subunit of Caulobacter sp. (strain K31).